Reading from the N-terminus, the 475-residue chain is Ribulose bisphosphate carboxylase large chain (475 aa).

The propeptide occupies 1 to 2 (MS). At Pro-3 the chain carries N-acetylproline. Lys-14 is modified (N6,N6,N6-trimethyllysine). The substrate site is built by Asn-123 and Thr-173. Lys-175 (proton acceptor) is an active-site residue. Lys-177 lines the substrate pocket. Positions 201, 203, and 204 each coordinate Mg(2+). Position 201 is an N6-carboxylysine (Lys-201). His-294 (proton acceptor) is an active-site residue. 3 residues coordinate substrate: Arg-295, His-327, and Ser-379.

This sequence belongs to the RuBisCO large chain family. Type I subfamily. Heterohexadecamer of 8 large chains and 8 small chains; disulfide-linked. The disulfide link is formed within the large subunit homodimers. Requires Mg(2+) as cofactor. In terms of processing, the disulfide bond which can form in the large chain dimeric partners within the hexadecamer appears to be associated with oxidative stress and protein turnover.

The protein resides in the plastid. The protein localises to the chloroplast. The enzyme catalyses 2 (2R)-3-phosphoglycerate + 2 H(+) = D-ribulose 1,5-bisphosphate + CO2 + H2O. It carries out the reaction D-ribulose 1,5-bisphosphate + O2 = 2-phosphoglycolate + (2R)-3-phosphoglycerate + 2 H(+). Its function is as follows. RuBisCO catalyzes two reactions: the carboxylation of D-ribulose 1,5-bisphosphate, the primary event in carbon dioxide fixation, as well as the oxidative fragmentation of the pentose substrate in the photorespiration process. Both reactions occur simultaneously and in competition at the same active site. The chain is Ribulose bisphosphate carboxylase large chain from Atriplex rosea (Red orache).